The chain runs to 319 residues: Cobalamin biosynthesis protein CobD (319 aa).

3 consecutive transmembrane segments (helical) span residues 54–76 (VLLL…WLSY), 154–173 (GVTA…ALLY), and 301–318 (VLGF…IYAI).

It belongs to the CobD/CbiB family.

The protein localises to the cell membrane. The protein operates within cofactor biosynthesis; adenosylcobalamin biosynthesis. Converts cobyric acid to cobinamide by the addition of aminopropanol on the F carboxylic group. The polypeptide is Cobalamin biosynthesis protein CobD (Halalkalibacterium halodurans (strain ATCC BAA-125 / DSM 18197 / FERM 7344 / JCM 9153 / C-125) (Bacillus halodurans)).